We begin with the raw amino-acid sequence, 298 residues long: Cation-efflux pump FieF (298 aa).

A helical membrane pass occupies residues 24 to 44 (LLIKIFAWWYTGSVSILAALV). The Zn(2+) site is built by aspartate 45 and aspartate 49. The next 2 helical transmembrane spans lie at 80-100 (SLAA…LTSI) and 112-132 (PGVG…LVTF). Zn(2+) is bound by residues histidine 151 and aspartate 155. 2 consecutive transmembrane segments (helical) span residues 154-174 (SDVM…YGWH) and 176-196 (ADAL…LRMG).

This sequence belongs to the cation diffusion facilitator (CDF) transporter (TC 2.A.4) family. FieF subfamily. As to quaternary structure, homodimer.

Its subcellular location is the cell inner membrane. The catalysed reaction is Zn(2+)(in) + H(+)(out) = Zn(2+)(out) + H(+)(in). It catalyses the reaction Cd(2+)(in) + H(+)(out) = Cd(2+)(out) + H(+)(in). It carries out the reaction Fe(2+)(in) + H(+)(out) = Fe(2+)(out) + H(+)(in). Its function is as follows. Divalent metal cation transporter which exports Zn(2+), Cd(2+) and possibly Fe(2+). May be involved in zinc and iron detoxification by efflux. The protein is Cation-efflux pump FieF of Salmonella typhi.